The chain runs to 1590 residues: MPGGACVLVIALMFLAWGEAQECSPGGHQFLRSPYRSVRFDSWHLQQSAVQDLICDHSLSPGWYRFLILDRPAEMPTKCVEMNHCGTQAPIWLSLRDSETLPSPGEIKQLTACATWQFLFSTTKDCCLFQIPVSVRNCGNFSVYLLQPTQGCMGYCAEAISDARLHPCGSDETETGGDCVRQLAASLPPPPAGRPEVLVELIESRLFCRCSFDVPATKNSVGFHIAWSRLSSQEVKEELTQETTVQAFSLLELDGINLRLGDRIFCSASVFFLENPHVQSVAIESQEFFAGFKLQPELSTISEDGKEYYLRIESTVPIICSEFSELDQECKISLKLKTIGQGREHLGLNLALSSCHVDLLQTSSCANGTCSHTFVYYTAVTDFSRDGDRVSNIVVQPIVNEDFLWNNYIPDSIQIKVKDVPTAYCYTFTDPHIITFDGRVYDNFKTGTFVLYKSMSRDFEVHVRQWDCRSLHYPVSCNCGFVAQEGGDIVTFDMCNGQLRESQPYLFIKSQDVTRNIKISESYLGRKVTIWFSSGAFIRADLGEWGMSLTIRAPSVDYRNTLGLCGTFDENPENDFHDKNGMQIDQNFNNYVAFINEWRILPGKSMSDTLPVSMTSPGKPSYCSCSLDTAAYPSSEDLDSVSRSEIALGCKDLNHVSLSSLIPELDVTSEYINSDTLVREINKHTSPEEYNLNLFLQEKKHINLTKLGLNVQKHPGNEKEDSLQYLANKKYTQGRGSHSQEMRYNRQNRWKRQNFHEFPPLFAFPSLSQTDLEELTYFFPEDHAEDVQQEFFPSWPTPSGLTEYSTLTLCQETLANSSIGRLCLAFLGKRLDSVIEMCVKDVLLKDDLSWAEAGVALLENECEKRIVEEGKYNTEEYGTSIEDILSVLKCPNLCSGNGQCMEWGCACSPSFSSYDCSDSYDKAPEITELGNAGFCDVQKYNCMMVRVFGKGFKELPSIKCEVTKLQYNSSEWMPGEPIYTQTVFHNSRAVDCQLPTDVQQFDTMDLVGGKPTGKWQLKVSNDGYKFSNPKITVIYDGACQVCGLYKNDSCTIKENVCIIDGLCYVEGDKNPTSPCLICRPKISRFTWSFLENNQPPVIQALQDKLQTFYGENFEYQFVAFDPEGSDIHFTLDSGPEGASVSSAGLFMWKTDLLTTQQITVRLNDDCDAETRVTIEVTVKSCDCLNGGSCVSDRNFSPGSGVYLCVCLPGFHGSLCEVDISGCQSNPCGLGSYISGFHSYSCDCPPELKVETQFVNQFTTQTVVLTRSDKSVNKEEDDKNAQGRKRHVKPTSGNAFTICKYPCGKSRECVAPNICKCKPGYIGSNCQTALCDPDCKNHGKCIKPNICQCLPGHGGATCDEEHCNPPCQHGGTCLAGNLCTCPYGFVGPRCETMVCNRHCENGGQCLTPDICQCKPGWYGPTCSTALCDPVCLNGGSCNKPNTCLCPNGFFGEHCQNAFCHPPCKNGGHCMRNNVCVCREGYTGRRFQKSICDPTCMNGGKCVGPSTCSCPSGWSGKRCNTPICLQKCKNGGECIAPSICHCPSSWEGVRCQIPICNPKCLYGGRCIFPNVCSCRTEYSGVKCEKKIQIRRH.

Positions 1 to 20 are cleaved as a signal peptide; sequence MPGGACVLVIALMFLAWGEA. A glycan (N-linked (GlcNAc...) asparagine) is linked at Asn367. The VWFD domain occupies 423–606; that stretch reads AYCYTFTDPH…EWRILPGKSM (184 aa). 2 cysteine pairs are disulfide-bonded: Cys425-Cys565 and Cys468-Cys477. 2 N-linked (GlcNAc...) asparagine glycosylation sites follow: Asn703 and Asn968. Positions 1177–1216 constitute an EGF-like 1 domain; sequence TVKSCDCLNGGSCVSDRNFSPGSGVYLCVCLPGFHGSLCE. 3 disulfides stabilise this stretch: Cys1181/Cys1189, Cys1183/Cys1204, and Cys1206/Cys1215. The segment covering 1268–1280 has biased composition (basic and acidic residues); it reads DKSVNKEEDDKNA. The tract at residues 1268 to 1288 is disordered; sequence DKSVNKEEDDKNAQGRKRHVK. EGF-like domains follow at residues 1294 to 1326, 1358 to 1390, 1422 to 1454, 1455 to 1486, 1518 to 1550, and 1551 to 1582; these read AFTI…SNCQ, DEEH…PRCE, STAL…EHCQ, NAFC…RRFQ, NTPI…VRCQ, and IPIC…VKCE. Cystine bridges form between Cys1298/Cys1308, Cys1302/Cys1314, Cys1316/Cys1325, Cys1362/Cys1372, Cys1366/Cys1378, Cys1380/Cys1389, Cys1426/Cys1436, Cys1430/Cys1442, Cys1444/Cys1453, Cys1458/Cys1468, Cys1462/Cys1474, Cys1522/Cys1532, Cys1526/Cys1538, Cys1540/Cys1549, Cys1554/Cys1564, Cys1558/Cys1570, and Cys1572/Cys1581.

It localises to the secreted. This Homo sapiens (Human) protein is von Willebrand factor D and EGF domain-containing protein (VWDE).